The following is a 272-amino-acid chain: tRNA pseudouridine synthase A (272 aa).

Asp-52 acts as the Nucleophile in catalysis. Residue Tyr-110 participates in substrate binding.

Belongs to the tRNA pseudouridine synthase TruA family. In terms of assembly, homodimer.

The catalysed reaction is uridine(38/39/40) in tRNA = pseudouridine(38/39/40) in tRNA. In terms of biological role, formation of pseudouridine at positions 38, 39 and 40 in the anticodon stem and loop of transfer RNAs. This is tRNA pseudouridine synthase A from Cupriavidus necator (strain ATCC 17699 / DSM 428 / KCTC 22496 / NCIMB 10442 / H16 / Stanier 337) (Ralstonia eutropha).